The following is a 74-amino-acid chain: Cytochrome b559 subunit alpha (74 aa).

A helical transmembrane segment spans residues 22-36 (VIHTVTIPSLFVAGW). A heme-binding site is contributed by His-24.

This sequence belongs to the PsbE/PsbF family. As to quaternary structure, heterodimer of an alpha subunit and a beta subunit. PSII is composed of 1 copy each of membrane proteins PsbA, PsbB, PsbC, PsbD, PsbE, PsbF, PsbH, PsbI, PsbJ, PsbK, PsbL, PsbM, PsbT, PsbX, PsbY, PsbZ, Psb30/Ycf12, at least 3 peripheral proteins of the oxygen-evolving complex and a large number of cofactors. It forms dimeric complexes. Heme b serves as cofactor.

The protein resides in the plastid. Its subcellular location is the cyanelle thylakoid membrane. In terms of biological role, this b-type cytochrome is tightly associated with the reaction center of photosystem II (PSII). PSII is a light-driven water:plastoquinone oxidoreductase that uses light energy to abstract electrons from H(2)O, generating O(2) and a proton gradient subsequently used for ATP formation. It consists of a core antenna complex that captures photons, and an electron transfer chain that converts photonic excitation into a charge separation. In Cyanophora paradoxa, this protein is Cytochrome b559 subunit alpha.